Here is a 454-residue protein sequence, read N- to C-terminus: Mannosylfructose-phosphate synthase (454 aa).

The protein belongs to the glycosyltransferase 1 family. Requires Mg(2+) as cofactor. The cofactor is Mn(2+).

It catalyses the reaction beta-D-fructose 6-phosphate + GDP-alpha-D-mannose = beta-D-fructofuranosyl alpha-D-mannopyranoside 6(F)-phosphate + GDP + H(+). It functions in the pathway carbohydrate metabolism; mannosylfructose biosynthesis; beta-D-fructofuranosyl alpha-D-mannopyranoside from D-fructose 6-phosphate and GDP-alpha-D-mannose: step 1/2. The polypeptide is Mannosylfructose-phosphate synthase (Agrobacterium fabrum (strain C58 / ATCC 33970) (Agrobacterium tumefaciens (strain C58))).